A 226-amino-acid chain; its full sequence is 2-C-methyl-D-erythritol 4-phosphate cytidylyltransferase (226 aa).

It belongs to the IspD/TarI cytidylyltransferase family. IspD subfamily.

It carries out the reaction 2-C-methyl-D-erythritol 4-phosphate + CTP + H(+) = 4-CDP-2-C-methyl-D-erythritol + diphosphate. It participates in isoprenoid biosynthesis; isopentenyl diphosphate biosynthesis via DXP pathway; isopentenyl diphosphate from 1-deoxy-D-xylulose 5-phosphate: step 2/6. Its function is as follows. Catalyzes the formation of 4-diphosphocytidyl-2-C-methyl-D-erythritol from CTP and 2-C-methyl-D-erythritol 4-phosphate (MEP). This Synechococcus sp. (strain CC9902) protein is 2-C-methyl-D-erythritol 4-phosphate cytidylyltransferase.